We begin with the raw amino-acid sequence, 944 residues long: Probable tape measure protein (944 aa).

A coiled-coil region spans residues 13–52; that stretch reads RMRDEASRTLRQVRDATRALQNQTNSTSQAQERLQEQFRK.

It belongs to the P2likevirus tape measure protein family.

Serves as a base for tail tube protein polymerization and acts as a template for tail length determination. The protein is Probable tape measure protein of Clostridioides difficile (Peptoclostridium difficile).